The following is a 785-amino-acid chain: Adhesion G-protein coupled receptor G7 (785 aa).

The first 26 residues, 1–26 (MRSCRSCNVRVLVAIVCGLLTGIVLG), serve as a signal peptide directing secretion. At 27-435 (LGIWRMVIRI…KYPKSLDILS (409 aa)) the chain is on the extracellular side. Asn82, Asn122, Asn133, Asn152, Asn159, Asn178, Asn195, Asn239, Asn289, Asn348, Asn400, and Asn408 each carry an N-linked (GlcNAc...) asparagine glycan. The GAIN-B domain occupies 271–425 (FSVQKGSSNS…AVLMSFKKDY (155 aa)). Disulfide bonds link Cys380–Cys407 and Cys395–Cys409. The tract at residues 380-425 (CVYWNFLINDWDTQGCQKTGNTTEFLRCNCSHTTNFAVLMSFKKDY) is GPS. A helical transmembrane segment spans residues 436–456 (NIGCALSIAGLALTILFQILT). The Cytoplasmic portion of the chain corresponds to 457–465 (RKIRKTSVT). The helical transmembrane segment at 466-486 (WVLVSLCSSMLIFNLLFVFGI) threads the bilayer. Over 487 to 523 (ENSNKNLKTSDSDINVKPENNKIPESDTIETPNPSCT) the chain is Extracellular. Residues 524–544 (AIAALLHYFLLVTFTWNGLSA) traverse the membrane as a helical segment. At 545–561 (TQLYFLLIRTMKPLPRH) the chain is on the cytoplasmic side. Residues 562–582 (FIIFISLVGWGVPAIIVGVTI) traverse the membrane as a helical segment. Over 583–623 (GSIYALSGNKRYWELDYRQEEICWLAVPKDNDYARSPLLWS) the chain is Extracellular. A helical membrane pass occupies residues 624–644 (FIIPVTIILITNITIFVIITV). Residues 645–668 (KVLWKNNQNLTSTKKVSSLKKVFS) lie on the Cytoplasmic side of the membrane. The chain crosses the membrane as a helical span at residues 669-689 (TLSIAVVFGVTWILAYAMLIS). Residues 690 to 694 (NDDIR) are Extracellular-facing. A helical transmembrane segment spans residues 695–715 (IVFSYIFCLFNTTQGLQIFIL). Residues 716–785 (YTVRTKVFQS…SGMTEETSLS (70 aa)) lie on the Cytoplasmic side of the membrane.

This sequence belongs to the G-protein coupled receptor 2 family. Adhesion G-protein coupled receptor (ADGR) subfamily. Selectively expressed in the intestinal tissues.

It localises to the membrane. Its function is as follows. Orphan receptor. The chain is Adhesion G-protein coupled receptor G7 (Adgrg7) from Mus musculus (Mouse).